We begin with the raw amino-acid sequence, 120 residues long: Membrane-anchored ubiquitin-fold protein 4 (120 aa).

In terms of domain architecture, Ubiquitin-like spans 7 to 73 (VELKFRLYDG…LENGKTVAQC (67 aa)). A lipid anchor (S-palmitoyl cysteine) is attached at Cys-115. Cys-117 bears the Cysteine methyl ester mark. Residue Cys-117 is the site of S-farnesyl cysteine attachment. Positions 118–120 (TIM) are cleaved as a propeptide — removed in mature form.

As to expression, ubiquitous.

The protein resides in the cell membrane. In terms of biological role, may serve as docking site to facilitate the association of other proteins to the plasma membrane. The sequence is that of Membrane-anchored ubiquitin-fold protein 4 (MUB4) from Arabidopsis thaliana (Mouse-ear cress).